Consider the following 142-residue polypeptide: Hemoglobin subunit alpha-2 (142 aa).

Positions 2–142 (LLTADDKKHI…VSSVLTSKYR (141 aa)) constitute a Globin domain. O2 is bound at residue His59. His88 is a heme b binding site.

It belongs to the globin family. Heterotetramer of two alpha chains and two beta chains. As to expression, red blood cells.

Its function is as follows. Involved in oxygen transport from the lung to the various peripheral tissues. The chain is Hemoglobin subunit alpha-2 (hba2) from Xenopus borealis (Kenyan clawed frog).